A 222-amino-acid polypeptide reads, in one-letter code: Glutathione S-transferase A4 (222 aa).

M1 is subject to N-acetylmethionine. In terms of domain architecture, GST N-terminal spans 3-83 (TKPKLHYPNG…YIADKHHLFG (81 aa)). Residues Y9, 54–55 (QV), and 67–68 (QT) each bind glutathione. Residues 85 to 208 (DLKERTLIDM…EPGSKKKPPP (124 aa)) form the GST C-terminal domain.

It belongs to the GST superfamily. Alpha family. In terms of assembly, homodimer.

It is found in the cytoplasm. The catalysed reaction is RX + glutathione = an S-substituted glutathione + a halide anion + H(+). Functionally, conjugation of reduced glutathione to a wide number of exogenous and endogenous hydrophobic electrophiles. The chain is Glutathione S-transferase A4 (GSTA4) from Bos taurus (Bovine).